A 94-amino-acid chain; its full sequence is Probable FAD-linked sulfhydryl oxidase FPV093 (94 aa).

The region spanning 1-94 (MDPRYWGSSF…IDIKKVKKLI (94 aa)) is the ERV/ALR sulfhydryl oxidase domain. Cys41 and Cys44 are joined by a disulfide.

The protein belongs to the poxviruses E10 family. Requires FAD as cofactor.

It carries out the reaction 2 R'C(R)SH + O2 = R'C(R)S-S(R)CR' + H2O2. In terms of biological role, FAD-dependent sulfhydryl oxidase that catalyzes disulfide bond formation. The protein is Probable FAD-linked sulfhydryl oxidase FPV093 of Fowlpox virus (strain NVSL) (FPV).